Consider the following 473-residue polypeptide: ATP synthase subunit beta 2 (473 aa).

158–165 provides a ligand contact to ATP; that stretch reads GGAGVGKT.

The protein belongs to the ATPase alpha/beta chains family. In terms of assembly, F-type ATPases have 2 components, CF(1) - the catalytic core - and CF(0) - the membrane proton channel. CF(1) has five subunits: alpha(3), beta(3), gamma(1), delta(1), epsilon(1). CF(0) has three main subunits: a(1), b(2) and c(9-12). The alpha and beta chains form an alternating ring which encloses part of the gamma chain. CF(1) is attached to CF(0) by a central stalk formed by the gamma and epsilon chains, while a peripheral stalk is formed by the delta and b chains.

Its subcellular location is the cell membrane. The catalysed reaction is ATP + H2O + 4 H(+)(in) = ADP + phosphate + 5 H(+)(out). Functionally, produces ATP from ADP in the presence of a proton gradient across the membrane. The catalytic sites are hosted primarily by the beta subunits. The chain is ATP synthase subunit beta 2 from Listeria welshimeri serovar 6b (strain ATCC 35897 / DSM 20650 / CCUG 15529 / CIP 8149 / NCTC 11857 / SLCC 5334 / V8).